We begin with the raw amino-acid sequence, 250 residues long: MGQKVHPIGIRLGVVKRHNANWYANPKQYAEYLLKDLQVREFLTKNLKNAMVSNILIERPSGAAKVTISTARPGIVIGKKGEDIEKLQRELTNIMGVPAQVSINEIDRPDLDARLVAEAIASQLEKRVMFRRAMKRAVQNTMRAGAKGIKVEVSGRLGGAEIARTEWYREGRVPLHTLRADIDYATMRAETTYGTIGVKVWIFRGEILGGMKQVMNPAPAEERPAKRGRGRGEGQERRGRRGDRAADKGE.

A KH type-2 domain is found at 39-107; the sequence is VREFLTKNLK…PAQVSINEID (69 aa). Positions 215–250 are disordered; the sequence is MNPAPAEERPAKRGRGRGEGQERRGRRGDRAADKGE. The segment covering 220-250 has biased composition (basic and acidic residues); it reads AEERPAKRGRGRGEGQERRGRRGDRAADKGE.

Belongs to the universal ribosomal protein uS3 family. As to quaternary structure, part of the 30S ribosomal subunit. Forms a tight complex with proteins S10 and S14.

Functionally, binds the lower part of the 30S subunit head. Binds mRNA in the 70S ribosome, positioning it for translation. This chain is Small ribosomal subunit protein uS3, found in Acinetobacter baumannii (strain AB0057).